The following is a 183-amino-acid chain: uncharacterized protein (183 aa).

This is an uncharacterized protein from Saccharomyces cerevisiae (strain ATCC 204508 / S288c) (Baker's yeast).